A 101-amino-acid polypeptide reads, in one-letter code: LIRVLANLLILQLSYAQKSSELVIGGDECNINEHRFLAALYDVWSGDFLCGGTLIHPEWVLTAAHCDRYRLSIKLGMHNKNVQFDDEQSRYPKKKYFFRCR.

The N-terminal stretch at 1–16 (LIRVLANLLILQLSYA) is a signal peptide. Positions 17–22 (QKSSEL) are excised as a propeptide. A Peptidase S1 domain is found at 23–101 (VIGGDECNIN…PKKKYFFRCR (79 aa)). Cys-50 and Cys-66 are joined by a disulfide. His-65 serves as the catalytic Charge relay system.

This sequence belongs to the peptidase S1 family. Snake venom subfamily. As to quaternary structure, monomer. Glycosylated. In terms of tissue distribution, expressed by the venom gland.

The protein localises to the secreted. Its activity is regulated as follows. Strongly inactivated by diisopropylfluorophosphate (DFP) and phenylmethanesulfonyl fluoride (PMSF), and to a lesser extent by tosyl-L-lysine chloromethyl ketone (TLCK). In terms of biological role, thrombin-like snake venom serine protease that releases specifically fibrinopeptide B from fibrinogen (FGB) to form fibrin clots. Shows a preferential cleavage at Arg-|-Gly bonds in fibrinogen beta chains. Cleaves fibrinogen beta chains preferentially to alpha chains. This is Thrombin-like enzyme okinaxobin-1 from Ovophis okinavensis (Ryukyu Island pit viper).